A 435-amino-acid chain; its full sequence is MFILTMGLNHHTAPIDIREKLVFKESEEEMALVTLQQEKSILENVIISTCNRTEIIAVVDQIHTGRYYLKRFMANWFQMDMEKIEPYLFFHEESDAVNHLYKVTAGLDSLVLGETQILGQVKHAFEIAKQTATTGTLLNKLFREVVTFAKKVHHHTKINENAVSVSYAAVEVAKKLYGSLDNKKIVLVGAGEMSELALQNLAGSGIADITIINRTKSNAELLANQFQAKVGAYENMNEHLMLADIVLVSTSAAEPIIKQAAMQDLMEQKASSMLVIDIGLPRNVEHDCSYIPNFHLYDIDDLAGVVSANSLERQRIVLELEKTIEAEVRNFFEWEKQLGVVPVIRALREKALDMQEVTMTSLENKLPGLTEREYIQIGKHMKSIINQMLKQPISELKEMSVEEDATTSIEHFKRIFGLSETDVTVIEKEQAETRS.

Residues 49–52 (TCNR), Ser-109, 114–116 (ETQ), and Gln-120 contribute to the substrate site. Cys-50 functions as the Nucleophile in the catalytic mechanism. 189 to 194 (GAGEMS) lines the NADP(+) pocket.

The protein belongs to the glutamyl-tRNA reductase family. In terms of assembly, homodimer.

It catalyses the reaction (S)-4-amino-5-oxopentanoate + tRNA(Glu) + NADP(+) = L-glutamyl-tRNA(Glu) + NADPH + H(+). It functions in the pathway porphyrin-containing compound metabolism; protoporphyrin-IX biosynthesis; 5-aminolevulinate from L-glutamyl-tRNA(Glu): step 1/2. Functionally, catalyzes the NADPH-dependent reduction of glutamyl-tRNA(Glu) to glutamate 1-semialdehyde (GSA). In Listeria monocytogenes serotype 4b (strain CLIP80459), this protein is Glutamyl-tRNA reductase.